Reading from the N-terminus, the 617-residue chain is MVRPWVFCLLLFPCSSAYSDSWMPLVNLTQHLLQEANSSFSSNCWVCLSIQTQRSLAMPAPLRTWTETPMKLRIMYSARTLSGPYPITDLERRLQNFQPLTPHSSFVNPDQRAIAFLQITSVTGILPILSRITSVRYPDDHVYESAQRPIWGSLSTQTILTSQAPLCISRFFKNSNHATFVGKLPASLCNHTFQLSPSANHQSIDLSSSYAFAPLMAMPGSKWRNPLRFSGPPSLNSGMPHYSCPIDDIHCHTYPTTPWRSCPSFPASTCYNLTLFEPDNSSHPITLSVDTTYFKIKLQGHKDPYPLFQYQPLMGAALSGQYSIWEYEPTVKKNGGITPNIFSHLVSLTYSFCLNSSGVFFLCGNSTYVCLPANWSGVCTLVFQYPDIELLPNNQTISVPLFATVPSSVPASRRKRALPLLPLLAGLGIASALGLGIAGITTSTVYFQQLSKALSDSLDEIATSIISLQDQIDSLAGVVLQNRRALDLIVAERGGTCLFLQEECCFYINQSGVVRHAARKLRERASELGTSSSSWIQWLGLGPWLPSWLTSLMAPILFILVLLVFRPCLLNCLTHSVSRRMSSFIHTTTEGHVDKILLLRESQYKRLPQEPPEEDAV.

A signal peptide spans 1–17 (MVRPWVFCLLLFPCSSA). The Extracellular segment spans residues 18–544 (YSDSWMPLVN…WIQWLGLGPW (527 aa)). Asn-27 is a glycosylation site (N-linked (GlcNAc...) asparagine). The CXXC signature appears at 44–47 (CWVC). 3 cysteine pairs are disulfide-bonded: Cys-44–Cys-47, Cys-44–Cys-505, and Cys-497–Cys-504. 2 N-linked (GlcNAc...) asparagine glycosylation sites follow: Asn-272 and Asn-365. Positions 420–440 (LLPLLAGLGIASALGLGIAGI) are fusion peptide. The short motif at 497-505 (CLFLQEECC) is the CX6CC element. The helical transmembrane segment at 545-565 (LPSWLTSLMAPILFILVLLVF) threads the bilayer. The Cytoplasmic segment spans residues 566 to 617 (RPCLLNCLTHSVSRRMSSFIHTTTEGHVDKILLLRESQYKRLPQEPPEEDAV).

The protein belongs to the gamma type-C retroviral envelope protein family. As to quaternary structure, the mature protein consists of a trimer of SU-TM heterodimers. The SU-TM heterodimers are attached by a labile interchain disulfide bond. In terms of processing, synthesized as an inactive precursor that is heavily N-glycosylated and processed likely by furin in the Golgi to yield the mature SU and TM proteins. The cleavage site between SU and TM requires the minimal sequence [KR]-X-[KR]-R. The CXXC motif is highly conserved across a broad range of retroviral envelope proteins. It is thought to participate in the formation of a labile disulfide bond possibly with the CX6CC motif present in the transmembrane protein. Isomerization of the intersubunit disulfide bond to an SU intrachain disulfide bond is thought to occur upon receptor recognition in order to allow membrane fusion. As to expression, highly expressed in placenta where it localizes to syncytiotrophoblasts of the labyrinthine zona. Specifically localizes to syncytiotrophoblast layer I (SynT-I). Also detected at very low levels in hippocampus, brain, testis and ovary.

The protein resides in the cell membrane. This endogenous retroviral envelope protein has retained its original fusogenic properties. Together with Synb, participates in trophoblast fusion and the formation of a syncytium during placenta morphogenesis. Syna is essential for placental development and is specifically required for formation of syncytiotrophoblast layer I (SynT-I). Promotes muscle myoblast fusion. Does not have immunosuppressive activity. This Mus musculus (Mouse) protein is Syncytin-A.